The following is a 431-amino-acid chain: Histidinol dehydrogenase (431 aa).

Residues Y130, Q191, and N214 each coordinate NAD(+). Residues S237, Q259, and H262 each contribute to the substrate site. Positions 259 and 262 each coordinate Zn(2+). Catalysis depends on proton acceptor residues E327 and H328. Substrate contacts are provided by H328, D361, E415, and H420. D361 lines the Zn(2+) pocket. Residue H420 participates in Zn(2+) binding.

This sequence belongs to the histidinol dehydrogenase family. The cofactor is Zn(2+).

It carries out the reaction L-histidinol + 2 NAD(+) + H2O = L-histidine + 2 NADH + 3 H(+). It functions in the pathway amino-acid biosynthesis; L-histidine biosynthesis; L-histidine from 5-phospho-alpha-D-ribose 1-diphosphate: step 9/9. Catalyzes the sequential NAD-dependent oxidations of L-histidinol to L-histidinaldehyde and then to L-histidine. This is Histidinol dehydrogenase from Rhodopseudomonas palustris (strain ATCC BAA-98 / CGA009).